Here is a 255-residue protein sequence, read N- to C-terminus: Increased copper sensitivity protein 2 (255 aa).

A compositionally biased stretch (basic and acidic residues) spans 1–12 (MGKFEQKERERI). Disordered regions lie at residues 1-32 (MGKFEQKERERISTFSFPTTGSQSSTSIKSLG) and 82-142 (PGDK…RKSH). Over residues 13-30 (STFSFPTTGSQSSTSIKS) the composition is skewed to polar residues. The span at 131-142 (SGRRKSYHRKSH) shows a compositional bias: basic residues. Ser-217 carries the phosphoserine modification.

This is Increased copper sensitivity protein 2 (ICS2) from Saccharomyces cerevisiae (strain ATCC 204508 / S288c) (Baker's yeast).